Reading from the N-terminus, the 156-residue chain is Small ribosomal subunit protein uS7 (156 aa).

It belongs to the universal ribosomal protein uS7 family. As to quaternary structure, part of the 30S ribosomal subunit. Contacts proteins S9 and S11.

In terms of biological role, one of the primary rRNA binding proteins, it binds directly to 16S rRNA where it nucleates assembly of the head domain of the 30S subunit. Is located at the subunit interface close to the decoding center, probably blocks exit of the E-site tRNA. The chain is Small ribosomal subunit protein uS7 from Synechococcus elongatus (strain ATCC 33912 / PCC 7942 / FACHB-805) (Anacystis nidulans R2).